Here is a 393-residue protein sequence, read N- to C-terminus: tRNA(Met) cytidine acetate ligase (393 aa).

ATP contacts are provided by glycine 81, asparagine 142, and arginine 167.

The protein belongs to the TmcAL family.

The protein localises to the cytoplasm. It catalyses the reaction cytidine(34) in elongator tRNA(Met) + acetate + ATP = N(4)-acetylcytidine(34) in elongator tRNA(Met) + AMP + diphosphate. Its function is as follows. Catalyzes the formation of N(4)-acetylcytidine (ac(4)C) at the wobble position of elongator tRNA(Met), using acetate and ATP as substrates. First activates an acetate ion to form acetyladenylate (Ac-AMP) and then transfers the acetyl group to tRNA to form ac(4)C34. The protein is tRNA(Met) cytidine acetate ligase of Bacillus cereus (strain ATCC 14579 / DSM 31 / CCUG 7414 / JCM 2152 / NBRC 15305 / NCIMB 9373 / NCTC 2599 / NRRL B-3711).